Consider the following 405-residue polypeptide: uncharacterized protein (405 aa).

12 helical membrane passes run 19-39 (ILSI…PLAV), 47-67 (VMGF…FATL), 85-105 (IVVF…TAGL), 129-149 (SFAG…LHIG), 157-177 (IVTY…YHWG), 178-198 (GLQA…LLAI), 224-244 (GMAL…ITLF), 252-272 (GAAF…LLFP), 283-303 (VAMI…VATM), 309-329 (IGVL…GVVA), 344-364 (TYTV…GLVM), and 366-386 (WAGV…ALLL).

This sequence belongs to the major facilitator superfamily. YhhS family.

It localises to the cell inner membrane. This is an uncharacterized protein from Escherichia coli O157:H7.